A 940-amino-acid chain; its full sequence is Isoleucine--tRNA ligase (940 aa).

The 'HIGH' region motif lies at 58–68 (PYANGAIHIGH). Residue Glu564 participates in L-isoleucyl-5'-AMP binding. Residues 605–609 (KMSKS) carry the 'KMSKS' region motif. Residue Lys608 coordinates ATP. Zn(2+) is bound by residues Cys903, Cys906, Cys923, and Cys926.

The protein belongs to the class-I aminoacyl-tRNA synthetase family. IleS type 1 subfamily. Monomer. Zn(2+) serves as cofactor.

It localises to the cytoplasm. The catalysed reaction is tRNA(Ile) + L-isoleucine + ATP = L-isoleucyl-tRNA(Ile) + AMP + diphosphate. Its function is as follows. Catalyzes the attachment of isoleucine to tRNA(Ile). As IleRS can inadvertently accommodate and process structurally similar amino acids such as valine, to avoid such errors it has two additional distinct tRNA(Ile)-dependent editing activities. One activity is designated as 'pretransfer' editing and involves the hydrolysis of activated Val-AMP. The other activity is designated 'posttransfer' editing and involves deacylation of mischarged Val-tRNA(Ile). The chain is Isoleucine--tRNA ligase from Nitrosococcus oceani (strain ATCC 19707 / BCRC 17464 / JCM 30415 / NCIMB 11848 / C-107).